Consider the following 118-residue polypeptide: Immunoglobulin lambda variable 2-8 (118 aa).

The signal sequence occupies residues 1–19 (MAWALLLLTLLTQGTGSWA). The residue at position 20 (glutamine 20) is a Pyrrolidone carboxylic acid. Residues 20–44 (QSALTQPPSASGSPGQSVTISCTGT) form a framework-1 region. Positions 20–118 (QSALTQPPSA…CSSYAGSNNF (99 aa)) constitute an Ig-like domain. Cysteine 41 and cysteine 109 are disulfide-bonded. The complementarity-determining-1 stretch occupies residues 45–53 (SSDVGGYNY). The interval 54–70 (VSWYQQHPGKAPKLMIY) is framework-2. The tract at residues 71–73 (EVS) is complementarity-determining-2. The framework-3 stretch occupies residues 74 to 109 (KRPSGVPDRFSGSKSGNTASLTVSGLQAEDEADYYC). The disordered stretch occupies residues 76–97 (PSGVPDRFSGSKSGNTASLTVS). A compositionally biased stretch (polar residues) spans 85–97 (GSKSGNTASLTVS). A complementarity-determining-3 region spans residues 110 to 118 (SSYAGSNNF).

As to quaternary structure, immunoglobulins are composed of two identical heavy chains and two identical light chains; disulfide-linked.

The protein resides in the secreted. The protein localises to the cell membrane. V region of the variable domain of immunoglobulin light chains that participates in the antigen recognition. Immunoglobulins, also known as antibodies, are membrane-bound or secreted glycoproteins produced by B lymphocytes. In the recognition phase of humoral immunity, the membrane-bound immunoglobulins serve as receptors which, upon binding of a specific antigen, trigger the clonal expansion and differentiation of B lymphocytes into immunoglobulins-secreting plasma cells. Secreted immunoglobulins mediate the effector phase of humoral immunity, which results in the elimination of bound antigens. The antigen binding site is formed by the variable domain of one heavy chain, together with that of its associated light chain. Thus, each immunoglobulin has two antigen binding sites with remarkable affinity for a particular antigen. The variable domains are assembled by a process called V-(D)-J rearrangement and can then be subjected to somatic hypermutations which, after exposure to antigen and selection, allow affinity maturation for a particular antigen. The protein is Immunoglobulin lambda variable 2-8 of Homo sapiens (Human).